Reading from the N-terminus, the 205-residue chain is Outer-membrane lipoprotein LolB (205 aa).

A signal peptide spans 1-17 (MRLRLFLAASALALLSG). Cys-18 carries N-palmitoyl cysteine lipidation. The S-diacylglycerol cysteine moiety is linked to residue Cys-18.

Belongs to the LolB family. As to quaternary structure, monomer.

The protein resides in the cell outer membrane. Its function is as follows. Plays a critical role in the incorporation of lipoproteins in the outer membrane after they are released by the LolA protein. The chain is Outer-membrane lipoprotein LolB from Pseudomonas aeruginosa (strain LESB58).